We begin with the raw amino-acid sequence, 961 residues long: DNA replication licensing factor MCM2 (961 aa).

Residues 1–17 (MDDSENNAPSTPGSPGF) are compositionally biased toward polar residues. Disordered regions lie at residues 1 to 81 (MDDS…FNDN) and 120 to 220 (AEAE…EEDE). Positions 39–78 (SDDDDDDVVGAEEAEVDPNVLPEDDGVVAAEEEEDGEDLF) are enriched in acidic residues. 2 stretches are compositionally biased toward basic and acidic residues: residues 120-146 (AEAE…LHDQ) and 166-176 (PPREPRTPRSD). Over residues 205–220 (QTDDDPYEDEFDEEDE) the composition is skewed to acidic residues. The C4-type zinc-finger motif lies at 380 to 406 (CSKCGTVLGPFFQNSYTEVKVGSCPEC). The region spanning 524–730 (IGERIVKSIA…FTDEMLARFV (207 aa)) is the MCM domain. 574-581 (GDPGTAKS) serves as a coordination point for ATP. The Arginine finger signature appears at 706–709 (SRFD).

It belongs to the MCM family. As to quaternary structure, component of the minichromosome maintenance (MCM) complex, a heterotetramer composed of MCM2, MCM3, MCM4, MCM5, MCM6 and MCM7. Interacts with CSN5. Widely expressed, with higher expression in developing tissues.

The protein localises to the nucleus. The catalysed reaction is ATP + H2O = ADP + phosphate + H(+). In terms of biological role, probable component of the MCM2-7 complex (MCM complex) that may function as a DNA helicase and which is essential to undergo a single round of replication initiation and elongation per cell cycle in eukaryotic cells. Can complement the fission yeast mcm2 mutant. This is DNA replication licensing factor MCM2 from Oryza sativa subsp. japonica (Rice).